A 350-amino-acid polypeptide reads, in one-letter code: Probable deoxyhypusine synthase (350 aa).

Residues 96–100 (SNLIS), 122–124 (TAG), E128, and D229 each bind NAD(+). 127 to 128 (EE) is a spermidine binding site. D234 provides a ligand contact to spermidine. Residue G276 coordinates NAD(+). Position 281 (H281) interacts with spermidine. 301–302 (SA) contributes to the NAD(+) binding site. Residues 307–309 (GSD) and 316–322 (EAVSWGK) each bind spermidine. K322 serves as the catalytic Nucleophile. Residue 335-336 (EV) participates in NAD(+) binding.

Belongs to the deoxyhypusine synthase family. Requires NAD(+) as cofactor.

It carries out the reaction [eIF5A protein]-L-lysine + spermidine = [eIF5A protein]-deoxyhypusine + propane-1,3-diamine. The protein operates within protein modification; eIF5A hypusination. In terms of biological role, catalyzes the NAD-dependent oxidative cleavage of spermidine and the subsequent transfer of the butylamine moiety of spermidine to the epsilon-amino group of a specific lysine residue of the eIF-5A precursor protein to form the intermediate deoxyhypusine residue. In Schizosaccharomyces pombe (strain 972 / ATCC 24843) (Fission yeast), this protein is Probable deoxyhypusine synthase.